A 339-amino-acid chain; its full sequence is Anthranilate phosphoribosyltransferase (339 aa).

5-phospho-alpha-D-ribose 1-diphosphate contacts are provided by residues Gly-79, 82-83 (GD), Thr-87, 89-92 (NVST), 107-115 (KHGNRAVSS), and Ser-119. Gly-79 provides a ligand contact to anthranilate. A Mg(2+)-binding site is contributed by Ser-91. Asn-110 serves as a coordination point for anthranilate. Arg-165 serves as a coordination point for anthranilate. Residues Asp-224 and Glu-225 each contribute to the Mg(2+) site.

The protein belongs to the anthranilate phosphoribosyltransferase family. In terms of assembly, homodimer. It depends on Mg(2+) as a cofactor.

It catalyses the reaction N-(5-phospho-beta-D-ribosyl)anthranilate + diphosphate = 5-phospho-alpha-D-ribose 1-diphosphate + anthranilate. It participates in amino-acid biosynthesis; L-tryptophan biosynthesis; L-tryptophan from chorismate: step 2/5. Catalyzes the transfer of the phosphoribosyl group of 5-phosphorylribose-1-pyrophosphate (PRPP) to anthranilate to yield N-(5'-phosphoribosyl)-anthranilate (PRA). The protein is Anthranilate phosphoribosyltransferase of Geobacillus stearothermophilus (Bacillus stearothermophilus).